A 322-amino-acid chain; its full sequence is Dioxygenase himG (322 aa).

Positions 148 and 229 each coordinate Fe cation.

Belongs to the PhyH family. Homodimer. Fe cation serves as cofactor.

It functions in the pathway secondary metabolite biosynthesis. Polyketide synthase-nonribosomal peptide synthetase; part of the him gene cluster that mediates the biosynthesis of himeic acid A, a ubiquitin-activating enzyme (E1) inhibitor. First, himA, together with the trans-enoyl reductase himH, catalyzes the formation of apolyketide chain, which is then condensed with leucine by the NRPS activity of himA. Dieckmann cyclization and release from himA gives a tetramic acid intermediate as the product of himA PKS-NRPS. HimG then catalyzes alpha-oxidation of the tetramic acid ring, with a subsequent rearrangement to yield apyrone intermediate. Two terminal methyl groups of polyketide and amide side chains are oxidized to carboxylic acids by himC cytochrome P450 monooxygenase to form himeic acid A. Himeic acid A is further converted to himeic acid B and C during culture growth. No gene responsible for pyrone to pyridone conversion was found in the him gene cluster and himeic acid A is non-enzymatically converted to himeic acid C by the incorporation of an ammonium nitrogen atom in a pH5 buffer, and to himeic acid B at a conversion ratio of 50% during incubation in MeOH for 5 days. The chain is Dioxygenase himG from Aspergillus japonicus.